A 326-amino-acid polypeptide reads, in one-letter code: Ribose-phosphate pyrophosphokinase (326 aa).

Residues Asn-45–Glu-47 and Arg-104–Gln-105 contribute to the ATP site. Residues His-138 and Asp-178 each contribute to the Mg(2+) site. Lys-202 is a catalytic residue. Residues Arg-204, Asp-230, and Asp-234–Thr-238 each bind D-ribose 5-phosphate.

It belongs to the ribose-phosphate pyrophosphokinase family. Class I subfamily. In terms of assembly, homohexamer. Requires Mg(2+) as cofactor.

It is found in the cytoplasm. It carries out the reaction D-ribose 5-phosphate + ATP = 5-phospho-alpha-D-ribose 1-diphosphate + AMP + H(+). The protein operates within metabolic intermediate biosynthesis; 5-phospho-alpha-D-ribose 1-diphosphate biosynthesis; 5-phospho-alpha-D-ribose 1-diphosphate from D-ribose 5-phosphate (route I): step 1/1. In terms of biological role, involved in the biosynthesis of the central metabolite phospho-alpha-D-ribosyl-1-pyrophosphate (PRPP) via the transfer of pyrophosphoryl group from ATP to 1-hydroxyl of ribose-5-phosphate (Rib-5-P). This Mycobacterium bovis (strain ATCC BAA-935 / AF2122/97) protein is Ribose-phosphate pyrophosphokinase.